Reading from the N-terminus, the 131-residue chain is Torsin-1A-interacting protein 2, isoform IFRG15 (131 aa).

The sequence is that of Torsin-1A-interacting protein 2, isoform IFRG15 (Tor1aip2) from Mus musculus (Mouse).